A 173-amino-acid chain; its full sequence is Transmembrane protein 278 (173 aa).

Positions methionine 1 to valine 14 are enriched in acidic residues. The interval methionine 1–arginine 25 is disordered. A run of 3 helical transmembrane segments spans residues histidine 31–glycine 51, alanine 53–leucine 73, and alanine 107–alanine 127. Residues aspartate 141 to glutamate 165 are disordered.

The protein belongs to the TMEM88 family.

The protein localises to the membrane. The chain is Transmembrane protein 278 (Tmem278) from Mus musculus (Mouse).